A 434-amino-acid polypeptide reads, in one-letter code: NFATC2-interacting protein (434 aa).

2 disordered regions span residues 1–63 and 176–237; these read MGSP…TPAL and GSED…RAYN. The segment covering 28–59 has biased composition (pro residues); that stretch reads GPQPCPKPRGPQPCPKPRGPQPCPKPRGPQPC. Basic residues predominate over residues 228 to 237; sequence PVRRKGRAYN. Residues 275 to 351 enclose the Ubiquitin-like domain; sequence PELTVKVRRG…IDCVVLSPPD (77 aa).

It is found in the nucleus. The protein resides in the cytoplasm. In terms of biological role, regulates the magnitude of NFAT-driven transcription of a specific subset of cytokine genes. This chain is NFATC2-interacting protein (nfatc2ip), found in Xenopus tropicalis (Western clawed frog).